We begin with the raw amino-acid sequence, 516 residues long: Arginyl-tRNA--protein transferase 1 (516 aa).

Positions 150 to 180 (IESEEKEKEKSIKKEGSKEFIHPQSIEEKLG) are enriched in basic and acidic residues. Positions 150-206 (IESEEKEKEKSIKKEGSKEFIHPQSIEEKLGSGEPSHPIKVHIGPKPGKGADLSKPP) are disordered.

The protein belongs to the R-transferase family. In terms of assembly, monomer. Interacts with LIAT1; LIAT1 is not a substrate of ATE1, the interaction takes place in the cytoplasm and seems to increase ATE1 arginyltransferase activity. As to quaternary structure, interacts with LIAT1; has a higher affinity than the other isoforms. Widely expressed.

The protein resides in the nucleus. It is found in the cytoplasm. It catalyses the reaction an N-terminal L-alpha-aminoacyl-[protein] + L-arginyl-tRNA(Arg) = an N-terminal L-arginyl-L-aminoacyl-[protein] + tRNA(Arg) + H(+). Involved in the post-translational conjugation of arginine to the N-terminal aspartate or glutamate of a protein. This arginylation is required for degradation of the protein via the ubiquitin pathway. Does not arginylate cysteine residues. This chain is Arginyl-tRNA--protein transferase 1, found in Mus musculus (Mouse).